Reading from the N-terminus, the 180-residue chain is Chromosome-anchoring protein RacA (180 aa).

The H-T-H motif DNA-binding region spans 5 to 25 (TPFIAKKLGVSPKAVVRIAQQ). Positions 89–151 (SHDFEQLTAQ…LEATLKKEEP (63 aa)) form a coiled coil.

It belongs to the RacA family.

The protein resides in the cytoplasm. In terms of biological role, required for the formation of axial filaments and for anchoring the origin regions at the cell poles in sporulating cells, thus ensuring proper chromosome segregation in the prespore. Binds in a dispersed manner throughout the chromosome but preferentially to sites clustered in the origin portion of the chromosome, causing condensation of the chromosome and its remodeling into an elongated, anchored structure. The chain is Chromosome-anchoring protein RacA from Bacillus cereus (strain ATCC 10987 / NRS 248).